A 481-amino-acid polypeptide reads, in one-letter code: uncharacterized protein (481 aa).

Helical transmembrane passes span 30 to 50 (TIII…FVQF), 96 to 116 (AIAL…FIGM), 154 to 174 (CMAV…FNSV), 196 to 216 (ISLV…IAII), 220 to 240 (LVPM…GMHI), 250 to 270 (IVQS…ALVS), 311 to 331 (MLGV…IILL), 354 to 374 (IGEF…YSSI), 391 to 411 (KPWL…FGAV), and 424 to 444 (VMAV…PIVW).

Belongs to the alanine or glycine:cation symporter (AGCS) (TC 2.A.25) family.

Its subcellular location is the cell inner membrane. This is an uncharacterized protein from Haemophilus influenzae (strain ATCC 51907 / DSM 11121 / KW20 / Rd).